The following is a 336-amino-acid chain: uncharacterized protein (336 aa).

The signal sequence occupies residues 1–23; sequence MKTRHLVYLAFALLGLGLAGLLE. 3 helical membrane passes run 34 to 54, 75 to 95, and 106 to 126; these read LLSL…LLLG, VVVA…LLTT, and VHSL…ALGY. Residues 144 to 255 enclose the PINc domain; that stretch reads VLDTSVLVDG…MARIYGVKAL (112 aa). D222 contacts Mg(2+). The TRAM domain maps to 267-328; the sequence is QLQVGDTLKL…IQTQVGRLFF (62 aa).

Belongs to the PINc/VapC protein family. Mg(2+) is required as a cofactor.

Its subcellular location is the membrane. Functionally, part of a toxin-antitoxin (TA) system. An RNase. This is an uncharacterized protein from Thermus thermophilus (strain ATCC 27634 / DSM 579 / HB8).